The chain runs to 124 residues: Fluoride-specific ion channel FluC (124 aa).

Transmembrane regions (helical) follow at residues 1–21 (MIGV…LRFA), 34–54 (FYAA…YLYG), 62–82 (VPLA…TTFS), and 101–121 (FSYL…GLIL). Residues Gly-76 and Thr-79 each contribute to the Na(+) site.

Belongs to the fluoride channel Fluc/FEX (TC 1.A.43) family.

The protein localises to the cell inner membrane. It carries out the reaction fluoride(in) = fluoride(out). With respect to regulation, na(+) is not transported, but it plays an essential structural role and its presence is essential for fluoride channel function. In terms of biological role, fluoride-specific ion channel. Important for reducing fluoride concentration in the cell, thus reducing its toxicity. This is Fluoride-specific ion channel FluC from Azotobacter vinelandii (strain DJ / ATCC BAA-1303).